The chain runs to 667 residues: MYDPARDSWEERDGDEARSLRGRLASDQPHAGFSSSEQIYGASGENNNTTDLQHPGPDPKTTASAKVLYAESPPAQSTTQTPPSISTHVQSPVNPAAQEASNTQSLTSAAQNQSNKSTTTMDNTSGSATPKPRADPSDKSNRPDQVASPTDQNGSQGDKKRKVPAEENASEKSQPTPDRPVSKRKRMEERHQKLRKRGRTPPSAYSRRDADETASAADRNGPTYRSTSPLPPPRSPTPEDQPRQRKRPGGGARMGLVDRETLRRRQEERERAQVEEAMRASQGRGLADVVRQHYNAVPQRGREWRKTESKIKGLRSFNNWIKSTLIQKFSPDEEFLARFNGTKDWAEDGGVPPVEEKRLLVIDLGCGKGGDLLKWQLAPQPVDLYVGLDPAEVSIVQARERYNGMKSGRGNRGRRNPIFHAEFQPKDCFGEWLGDVDIVQQVGIDPNVGPGGSVMSSRWGGGGFDVVASMFTIHYAFESEEKARQMLRNVAGCLKKGGRFLGVCPNSDVISARVSEINAKKKERQSQAKKEKTDEAPEDGEVEEDDGKVEWGNQIYRVRFPVTTPEDGIFRPPFGWKYSYFMEEAVEEVPEYVVPWEAFRALTEDYNLELQYRKPFLDIWRDEKDDPELGPLSERMGVRDRATGELLMTEEEKEAASFYHAFCFYKV.

Basic and acidic residues predominate over residues 1–19 (MYDPARDSWEERDGDEARS). The segment at 1-272 (MYDPARDSWE…RRRQEERERA (272 aa)) is disordered. Polar residues predominate over residues 33–52 (FSSSEQIYGASGENNNTTDL). A compositionally biased stretch (low complexity) spans 72–87 (SPPAQSTTQTPPSIST). Positions 88-128 (HVQSPVNPAAQEASNTQSLTSAAQNQSNKSTTTMDNTSGSA) are enriched in polar residues. Residues 132 to 142 (PRADPSDKSNR) show a composition bias toward basic and acidic residues. The span at 147 to 156 (ASPTDQNGSQ) shows a compositional bias: polar residues. Positions 256 to 272 (LVDRETLRRRQEERERA) are enriched in basic and acidic residues. The mRNA cap 0 methyltransferase domain maps to 309-667 (SKIKGLRSFN…FYHAFCFYKV (359 aa)). An mRNA-binding site is contributed by 318–319 (NN). Residues K322, G365, D389, D427, 470–472 (MFT), and Y475 contribute to the S-adenosyl-L-methionine site. Residues 521–535 (KKERQSQAKKEKTDE) are compositionally biased toward basic and acidic residues. Residues 521 to 547 (KKERQSQAKKEKTDEAPEDGEVEEDDG) form a disordered region. Residues 536-547 (APEDGEVEEDDG) are compositionally biased toward acidic residues.

This sequence belongs to the class I-like SAM-binding methyltransferase superfamily. mRNA cap 0 methyltransferase family.

It localises to the nucleus. It carries out the reaction a 5'-end (5'-triphosphoguanosine)-ribonucleoside in mRNA + S-adenosyl-L-methionine = a 5'-end (N(7)-methyl 5'-triphosphoguanosine)-ribonucleoside in mRNA + S-adenosyl-L-homocysteine. Responsible for methylating the 5'-cap structure of mRNAs. In Neosartorya fischeri (strain ATCC 1020 / DSM 3700 / CBS 544.65 / FGSC A1164 / JCM 1740 / NRRL 181 / WB 181) (Aspergillus fischerianus), this protein is mRNA cap guanine-N(7) methyltransferase (abd1).